The following is a 251-amino-acid chain: MAKATGRYNLISPKKDLEKGVVLSDLCNFLVSQTIQGWKVYWAGIEFDVTHKGMALLHRLKTNDFAPAWSMTRNLFPHLFQNPNSTIESPLWALRVILAAGIQDQLIDQSLIEPLAGALGLISDWLLTTNTNHFNMRTQRVKEQLSLKMLSLIRSNILKFINKLDALHVVNYNGLLSSIEIGTQNHTIIITRTNMGFLVELQEPDKSAMNRMKPGPAKFSLLHESTLKAFTQGSSTRMQSLILEFNSSLAI.

Belongs to the filoviridae membrane-associated protein VP24 family. As to quaternary structure, interacts with host importins KPNA1, KPNA5 and KPNA6. Interacts with host STAT1. Interacts with host KEAP1; this interaction activates host transcription factor NRF2 by blocking its interaction with KEAP1.

It is found in the virion membrane. Its subcellular location is the host cell membrane. It localises to the host endomembrane system. Its function is as follows. Prevents the establishment of cellular antiviral state by blocking the interferon-alpha/beta (IFN-alpha/beta) and IFN-gamma signaling pathways. Blocks the IFN-induced nuclear accumulation of host phosphorylated STAT1 by interacting with the STAT1-binding region of host importins. Alternatively also interacts directly with host STAT1 and may additionally inhibit its non-phosphorylated form. Plays a role in assembly of viral nucleocapsid and virion budding. May act as a minor matrix protein that plays a role in assembly of viral nucleocapsid and virion budding. The chain is Membrane-associated protein VP24 (VP24) from Epomops franqueti (Franquet's epauletted fruit bat).